Reading from the N-terminus, the 133-residue chain is Putative dispanin subfamily A member 2d (133 aa).

At Met-1 to His-57 the chain is on the extracellular side. Residue Lys-24 forms a Glycyl lysine isopeptide (Lys-Gly) (interchain with G-Cter in ubiquitin) linkage. The helical transmembrane segment at Val-58–Phe-78 threads the bilayer. The Cytoplasmic segment spans residues Ala-79–Asn-107. Glycyl lysine isopeptide (Lys-Gly) (interchain with G-Cter in ubiquitin) cross-links involve residues Lys-83, Lys-88, and Lys-104. The helical transmembrane segment at Ile-108–Ile-128 threads the bilayer. Residues Phe-129 to Arg-133 lie on the Extracellular side of the membrane.

It belongs to the CD225/Dispanin family.

It is found in the membrane. The sequence is that of Putative dispanin subfamily A member 2d from Homo sapiens (Human).